We begin with the raw amino-acid sequence, 203 residues long: uncharacterized protein (203 aa).

This sequence belongs to the mimivirus L332/L333/L334 family.

This is an uncharacterized protein from Acanthamoeba polyphaga mimivirus (APMV).